Reading from the N-terminus, the 64-residue chain is Translation machinery-associated protein 7 homolog (64 aa).

The segment at 1–64 (MTGREGGKKK…TGGIKKSGKK (64 aa)) is disordered. Residues 21 to 50 (EMDEEDMAFKQKQKEQQKAMEAAKQKAAKG) are a coiled coil. The segment covering 27–44 (MAFKQKQKEQQKAMEAAK) has biased composition (basic and acidic residues).

It belongs to the TMA7 family.

In Aedes aegypti (Yellowfever mosquito), this protein is Translation machinery-associated protein 7 homolog.